A 1052-amino-acid chain; its full sequence is CCAAT/enhancer-binding protein zeta (1052 aa).

3 disordered regions span residues 1-40 (MSAD…KNGF), 122-158 (VENK…VSKA), and 621-677 (SQLD…AEKP). The span at 23 to 34 (EDPDEEDEEDGD) shows a compositional bias: acidic residues. Over residues 122–150 (VENKKQKATEGKKTSEKKVKNKTVAEQRP) the composition is skewed to basic and acidic residues. Residues 627-643 (PESDEENFVDVGDDSDD) show a composition bias toward acidic residues. Serine 629 and serine 641 each carry phosphoserine. The segment covering 644 to 677 (EKFTDADKGTATDAVKEVESKETEPESSAEAEKP) has biased composition (basic and acidic residues). Serine 837 carries the post-translational modification Phosphoserine. The segment at 876 to 969 (KGAKADLEDS…QGQKKKKKSF (94 aa)) is disordered. Residues 883 to 932 (EDSESSDGELGDLDDDEVSLGSMNDEDFEIDEDGGTFMDVSDDESEDAPE) are compositionally biased toward acidic residues. Phosphoserine is present on residues serine 958, serine 972, and serine 977. The disordered stretch occupies residues 1032–1052 (KKKKNFRKKMKAPQKPKRQRK).

It belongs to the CBF/MAK21 family. In terms of tissue distribution, ubiquitous.

It is found in the nucleus. Stimulates transcription from the HSP70 promoter. This chain is CCAAT/enhancer-binding protein zeta (Cebpz), found in Mus musculus (Mouse).